We begin with the raw amino-acid sequence, 492 residues long: MGLYTLMVTFLCTIVLPVLLFLAAVKLWEMLMIRRVDPNCRSPLPPGTMGLPFIGETLQLILQRRKFLRMKRQKYGCIYKTHLFGNPTVRVMGADNVRQILLGEHKLVSVQWPASVRTILGSDTLSNVHGVQHKNKKKAIMRAFSRDALEHYIPVIQQEVKSAIQEWLQKDSCVLVYPEMKKLMFRIAMRILLGFEPEQIKTDEQELVEAFEEMIKNLFSLPIDVPFSGLYRGLRARNFIHSKIEENIRKKIQDDDNENEQKYKDALQLLIENSRRSDEPFSLQAMKEAATELLFGGHETTASTATSLVMFLGLNTEVVQKVREEVQEKVEMGMYTPGKGLSMELLDQLKYTGCVIKETLRINPPVPGGFRVALKTFELNGYQIPKGWNVIYSICDTHDVADVFPNKEEFQPERFMSKGLEDGSRFNYIPFGGGSRMCVGKEFAKVLLKIFLVELTQHCNWILSNGPPTMKTGPTIYPVDNLPTKFTSYVRN.

Cysteine 438 contacts heme.

This sequence belongs to the cytochrome P450 family. Heme is required as a cofactor.

Its subcellular location is the endoplasmic reticulum membrane. It is found in the microsome membrane. The catalysed reaction is all-trans-retinoate + reduced [NADPH--hemoprotein reductase] + O2 = all-trans-(4S)-hydroxyretinoate + oxidized [NADPH--hemoprotein reductase] + H2O + H(+). In terms of biological role, a cytochrome P450 monooxygenase involved in the metabolism of all-trans retinoic acid (atRA), a signaling molecule that binds to retinoic acid receptors and regulates gene transcription. Mechanistically, uses molecular oxygen inserting one oxygen atom into a substrate, and reducing the second into a water molecule, with two electrons provided by NADPH via cytochrome P450 reductase (CPR; NADPH-ferrihemoprotein reductase). Catalyzes the hydroxylation of carbon hydrogen bonds of atRA primarily at C-4. Has no activity toward 9-cis and 13-cis retinoic acid stereoisomers. May play a role in the oxidative metabolism of xenobiotics such as tazarotenic acid. This Danio rerio (Zebrafish) protein is Cytochrome P450 26A1 (cyp26a1).